Consider the following 71-residue polypeptide: Small ribosomal subunit protein bS21 (71 aa).

Belongs to the bacterial ribosomal protein bS21 family.

The sequence is that of Small ribosomal subunit protein bS21 from Hahella chejuensis (strain KCTC 2396).